The chain runs to 469 residues: Histone acetyltransferase ESA1 (469 aa).

Positions 1–26 (MALAEADLPNGKTNGKASGSEETPAP) are disordered. Over residues 11–21 (GKTNGKASGSE) the composition is skewed to polar residues. The Tudor-knot domain occupies 39–92 (LRVGCKVHVEKDGEDRVAEILSVQMRRGNLEFYVHYVEFNKRLDERIAATRVDL). The segment at 98-163 (WPEPEKPKKP…GTTQDPDNFN (66 aa)) is disordered. Over residues 118–127 (EKKKNPSKKQ) the composition is skewed to basic residues. 2 stretches are compositionally biased toward polar residues: residues 130–139 (TDSAATTPGA) and 150–160 (LQVNGTTQDPD). An MYST-type HAT domain is found at 185–457 (ARVRNLQRIV…VNSELLKWKP (273 aa)). A C2HC MYST-type; degenerate zinc finger spans residues 218–243 (IYICDFTLCYFGSKKQFERFRSKSTL). K285 bears the N6-acetyllysine; by autocatalysis mark. Acetyl-CoA is bound by residues 326–330 (ACILT) and 335–341 (QRHGYGR). E361 (proton donor/acceptor) is an active-site residue. S365 is an acetyl-CoA binding site.

It belongs to the MYST (SAS/MOZ) family. In terms of assembly, component of the NuA4 histone acetyltransferase complex. Post-translationally, autoacetylation at Lys-285 is required for proper function.

The protein localises to the nucleus. Its subcellular location is the chromosome. It catalyses the reaction L-lysyl-[histone] + acetyl-CoA = N(6)-acetyl-L-lysyl-[histone] + CoA + H(+). The enzyme catalyses L-lysyl-[protein] + acetyl-CoA = N(6)-acetyl-L-lysyl-[protein] + CoA + H(+). The catalysed reaction is 2-hydroxyisobutanoyl-CoA + L-lysyl-[protein] = N(6)-(2-hydroxyisobutanoyl)-L-lysyl-[protein] + CoA + H(+). It carries out the reaction (2E)-butenoyl-CoA + L-lysyl-[protein] = N(6)-(2E)-butenoyl-L-lysyl-[protein] + CoA + H(+). Catalytic component of the NuA4 histone acetyltransferase (HAT) complex which is involved in epigenetic transcriptional activation of selected genes principally by acetylation of nucleosomal histones H4, H3, H2B, H2A and H2A variant H2A.Z. Acetylates histone H4 to form H4K5ac, H4K8ac, H4K12ac and H4K16ac, histone H3 to form H3K14ac, and histone H2A to form H2AK4ac and H2AK7ac. The NuA4 complex is involved in the DNA damage response and is required for chromosome segregation. The NuA4 complex plays a direct role in repair of DNA double-strand breaks (DSBs) through homologous recombination. Recruitment to promoters depends on H3K4me. Also acetylates non-histone proteins. In addition to protein acetyltransferase, can use different acyl-CoA substrates, such as 2-hydroxyisobutanoyl-CoA (2-hydroxyisobutyryl-CoA) or (2E)-butenoyl-CoA (crotonyl-CoA), and is able to mediate protein 2-hydroxyisobutyrylation and crotonylation, respectively. This Yarrowia lipolytica (strain CLIB 122 / E 150) (Yeast) protein is Histone acetyltransferase ESA1 (ESA1).